Reading from the N-terminus, the 145-residue chain is SsrA-binding protein (145 aa).

It belongs to the SmpB family.

The protein resides in the cytoplasm. Functionally, required for rescue of stalled ribosomes mediated by trans-translation. Binds to transfer-messenger RNA (tmRNA), required for stable association of tmRNA with ribosomes. tmRNA and SmpB together mimic tRNA shape, replacing the anticodon stem-loop with SmpB. tmRNA is encoded by the ssrA gene; the 2 termini fold to resemble tRNA(Ala) and it encodes a 'tag peptide', a short internal open reading frame. During trans-translation Ala-aminoacylated tmRNA acts like a tRNA, entering the A-site of stalled ribosomes, displacing the stalled mRNA. The ribosome then switches to translate the ORF on the tmRNA; the nascent peptide is terminated with the 'tag peptide' encoded by the tmRNA and targeted for degradation. The ribosome is freed to recommence translation, which seems to be the essential function of trans-translation. This is SsrA-binding protein from Mycoplasmopsis pulmonis (strain UAB CTIP) (Mycoplasma pulmonis).